The sequence spans 340 residues: NADH-quinone oxidoreductase subunit H (340 aa).

8 helical membrane passes run 4–24, 78–98, 113–133, 151–171, 184–204, 244–264, 273–293, and 316–336; these read TIGI…PLLI, YLFV…WAVI, VLYL…AGWA, VSYE…AGSM, MLHW…ISGI, SMIL…LSPF, IFFI…FLFV, and VLIP…VAHV.

Belongs to the complex I subunit 1 family. As to quaternary structure, NDH-1 is composed of 14 different subunits. Subunits NuoA, H, J, K, L, M, N constitute the membrane sector of the complex.

It is found in the cell inner membrane. It catalyses the reaction a quinone + NADH + 5 H(+)(in) = a quinol + NAD(+) + 4 H(+)(out). Its function is as follows. NDH-1 shuttles electrons from NADH, via FMN and iron-sulfur (Fe-S) centers, to quinones in the respiratory chain. The immediate electron acceptor for the enzyme in this species is believed to be ubiquinone. Couples the redox reaction to proton translocation (for every two electrons transferred, four hydrogen ions are translocated across the cytoplasmic membrane), and thus conserves the redox energy in a proton gradient. This subunit may bind ubiquinone. The protein is NADH-quinone oxidoreductase subunit H of Legionella pneumophila (strain Lens).